Consider the following 141-residue polypeptide: Galactose-6-phosphate isomerase subunit LacA (141 aa).

It belongs to the LacAB/RpiB family. As to quaternary structure, heteromultimeric protein consisting of LacA and LacB.

It carries out the reaction aldehydo-D-galactose 6-phosphate = keto-D-tagatose 6-phosphate. Its pathway is carbohydrate metabolism; D-galactose 6-phosphate degradation; D-tagatose 6-phosphate from D-galactose 6-phosphate: step 1/1. This chain is Galactose-6-phosphate isomerase subunit LacA, found in Streptococcus equi subsp. equi (strain 4047).